A 345-amino-acid polypeptide reads, in one-letter code: Transcription initiation factor IIB (345 aa).

A TFIIB-type zinc finger spans residues 8–40 (VGRNCPHCSAVDSLQTDDVMGEVACTACALVVA). 4 residues coordinate Zn(2+): cysteine 12, cysteine 15, cysteine 32, and cysteine 35. Disordered regions lie at residues 59-89 (DVDH…HMSS) and 318-345 (PTAG…REET). A compositionally biased stretch (low complexity) spans 71-83 (TAATSAAGSLSAA).

The protein belongs to the TFIIB family. As to quaternary structure, monomer. Interacts with RNA polymerase II subunits RPB1 and RPB2. Interacts with TBP; the interaction is direct.

It localises to the nucleus. In terms of biological role, specifically binds to the promoter of the spliced leader (SL) RNA gene and thus is essential for SLRNA transcription. The sequence is that of Transcription initiation factor IIB from Trypanosoma brucei brucei.